We begin with the raw amino-acid sequence, 545 residues long: Delta 8-(E)-sphingolipid desaturase (545 aa).

One can recognise a Cytochrome b5 heme-binding domain in the interval Met1 to Gln82. Heme contacts are provided by His42 and His65. The tract at residues Phe97–Ala124 is disordered. The chain crosses the membrane as a helical span at residues Leu227–Ser247. Residues His249–His253 carry the Histidine box-1 motif. A helical transmembrane segment spans residues Val262–Trp282. A Histidine box-2 motif is present at residues His286 to His290. The next 2 membrane-spanning stretches (helical) occupy residues Ile382 to Pro402 and Leu408 to Ser428. Residues Gln470–His474 carry the Histidine box-3 motif.

It belongs to the fatty acid desaturase type 1 family.

The protein resides in the membrane. The enzyme catalyses an N-acylsphing-4-enine + 2 Fe(II)-[cytochrome b5] + O2 + 2 H(+) = a (4E,8E)-4-sphinga-4,8-dienine ceramide + 2 Fe(III)-[cytochrome b5] + 2 H2O. The protein operates within lipid metabolism; sphingolipid metabolism. Delta(8)-fatty-acid desaturase which introduces a double bond at the 8-position in the long-chain base (LCB) of ceramides. Required for the formation of the di-unsaturated sphingoid base (E,E)-sphinga-4,8-dienine during glucosylceramide (GluCer) biosynthesis. Plays an important role in conidiation. The sequence is that of Delta 8-(E)-sphingolipid desaturase from Emericella nidulans (strain FGSC A4 / ATCC 38163 / CBS 112.46 / NRRL 194 / M139) (Aspergillus nidulans).